The following is a 252-amino-acid chain: Phosphoribosylformylglycinamidine synthase subunit PurQ (252 aa).

One can recognise a Glutamine amidotransferase type-1 domain in the interval 6–237 (VGVVVFPGSN…FAHLAGTKRS (232 aa)). The active-site Nucleophile is Cys-89. Active-site residues include His-206 and Glu-208.

As to quaternary structure, part of the FGAM synthase complex composed of 1 PurL, 1 PurQ and 2 PurS subunits.

It is found in the cytoplasm. It carries out the reaction N(2)-formyl-N(1)-(5-phospho-beta-D-ribosyl)glycinamide + L-glutamine + ATP + H2O = 2-formamido-N(1)-(5-O-phospho-beta-D-ribosyl)acetamidine + L-glutamate + ADP + phosphate + H(+). The enzyme catalyses L-glutamine + H2O = L-glutamate + NH4(+). It functions in the pathway purine metabolism; IMP biosynthesis via de novo pathway; 5-amino-1-(5-phospho-D-ribosyl)imidazole from N(2)-formyl-N(1)-(5-phospho-D-ribosyl)glycinamide: step 1/2. Its function is as follows. Part of the phosphoribosylformylglycinamidine synthase complex involved in the purines biosynthetic pathway. Catalyzes the ATP-dependent conversion of formylglycinamide ribonucleotide (FGAR) and glutamine to yield formylglycinamidine ribonucleotide (FGAM) and glutamate. The FGAM synthase complex is composed of three subunits. PurQ produces an ammonia molecule by converting glutamine to glutamate. PurL transfers the ammonia molecule to FGAR to form FGAM in an ATP-dependent manner. PurS interacts with PurQ and PurL and is thought to assist in the transfer of the ammonia molecule from PurQ to PurL. The chain is Phosphoribosylformylglycinamidine synthase subunit PurQ from Chlorobaculum parvum (strain DSM 263 / NCIMB 8327) (Chlorobium vibrioforme subsp. thiosulfatophilum).